We begin with the raw amino-acid sequence, 154 residues long: uncharacterized protein (154 aa).

This protein may be involved in virus assembly. Essential for virus function. This is an uncharacterized protein from Saccharolobus solfataricus (Sulfolobus solfataricus).